A 162-amino-acid polypeptide reads, in one-letter code: Phosphopantetheine adenylyltransferase (162 aa).

Position 11 (Ser-11) interacts with substrate. Residues 11–12 (SF) and His-19 contribute to the ATP site. 3 residues coordinate substrate: Lys-43, Leu-75, and Arg-89. Residues 90–92 (GLR), Glu-100, and 125–131 (FSYISSS) contribute to the ATP site.

It belongs to the bacterial CoaD family. As to quaternary structure, homohexamer. Mg(2+) is required as a cofactor.

It localises to the cytoplasm. The enzyme catalyses (R)-4'-phosphopantetheine + ATP + H(+) = 3'-dephospho-CoA + diphosphate. It functions in the pathway cofactor biosynthesis; coenzyme A biosynthesis; CoA from (R)-pantothenate: step 4/5. Its function is as follows. Reversibly transfers an adenylyl group from ATP to 4'-phosphopantetheine, yielding dephospho-CoA (dPCoA) and pyrophosphate. The polypeptide is Phosphopantetheine adenylyltransferase (Petrotoga mobilis (strain DSM 10674 / SJ95)).